We begin with the raw amino-acid sequence, 385 residues long: Putative glutamate--cysteine ligase 2 (385 aa).

It belongs to the glutamate--cysteine ligase type 2 family. YbdK subfamily.

The enzyme catalyses L-cysteine + L-glutamate + ATP = gamma-L-glutamyl-L-cysteine + ADP + phosphate + H(+). Its function is as follows. ATP-dependent carboxylate-amine ligase which exhibits weak glutamate--cysteine ligase activity. The protein is Putative glutamate--cysteine ligase 2 of Solibacter usitatus (strain Ellin6076).